The chain runs to 540 residues: Cytochrome bc1 complex cytochrome b subunit (540 aa).

A helical membrane pass occupies residues Glu-40–Phe-60. The heme site is built by His-105 and His-119. 3 helical membrane-spanning segments follow: residues Ala-109–Phe-129, Trp-137–Leu-157, and Ile-169–Phe-189. Positions 206 and 221 each coordinate heme. Transmembrane regions (helical) follow at residues Val-207–Tyr-227, Phe-259–Ile-279, Ala-325–Ile-345, Leu-371–Phe-391, and Ile-408–Leu-428.

This sequence belongs to the cytochrome b family. The cytochrome bc1 complex is composed of a cytochrome b (QcrB), the Rieske protein iron-sulfur (QcrA) and a diheme cytochrome c (QcrC) subunit. Heme serves as cofactor.

It localises to the cell membrane. It catalyses the reaction a quinol + 2 Fe(III)-[cytochrome c](out) = a quinone + 2 Fe(II)-[cytochrome c](out) + 2 H(+)(out). Cytochrome b subunit of the cytochrome bc1 complex, an essential component of the respiratory electron transport chain required for ATP synthesis. The bc1 complex catalyzes the oxidation of menaquinol and the reduction of cytochrome c in the respiratory chain. The bc1 complex operates through a Q-cycle mechanism that couples electron transfer to generation of the proton gradient that drives ATP synthesis. This Corynebacterium diphtheriae (strain ATCC 700971 / NCTC 13129 / Biotype gravis) protein is Cytochrome bc1 complex cytochrome b subunit (qcrB).